We begin with the raw amino-acid sequence, 205 residues long: Polyamine-modulated factor 1 (205 aa).

The disordered stretch occupies residues 1-28; that stretch reads MAEASSVNVGSGCAEKGPEELSQEPARP. Residues 140-190 are a coiled coil; the sequence is YLLQQRDALQRRVQRQEAENRQLADAVLAGRRQLEELQLQAQARQQAWQAL.

As to quaternary structure, component of the MIS12 complex composed of MIS12, DSN1, NSL1 and PMF1. Interacts with COPS7A. Interacts via its coiled-coil domain with the leucine-zipper domain of NFE2L2. The interaction with NFE2L2 is required for the transcriptional regulation of SSAT.

Its subcellular location is the nucleus. The protein resides in the chromosome. It is found in the centromere. The protein localises to the kinetochore. In terms of biological role, part of the MIS12 complex which is required for normal chromosome alignment and segregation and kinetochore formation during mitosis. May act as a cotranscription partner of NFE2L2 involved in regulation of polyamine-induced transcription of SSAT. The chain is Polyamine-modulated factor 1 (PMF1) from Bos taurus (Bovine).